The chain runs to 427 residues: Enolase (427 aa).

Gln163 contributes to the (2R)-2-phosphoglycerate binding site. The Proton donor role is filled by Glu205. Residues Asp242, Glu285, and Asp312 each coordinate Mg(2+). Lys337, Arg366, Ser367, and Lys388 together coordinate (2R)-2-phosphoglycerate. Catalysis depends on Lys337, which acts as the Proton acceptor.

The protein belongs to the enolase family. Mg(2+) is required as a cofactor.

The protein resides in the cytoplasm. It localises to the secreted. It is found in the cell surface. The catalysed reaction is (2R)-2-phosphoglycerate = phosphoenolpyruvate + H2O. Its pathway is carbohydrate degradation; glycolysis; pyruvate from D-glyceraldehyde 3-phosphate: step 4/5. Catalyzes the reversible conversion of 2-phosphoglycerate (2-PG) into phosphoenolpyruvate (PEP). It is essential for the degradation of carbohydrates via glycolysis. In Burkholderia mallei (strain NCTC 10247), this protein is Enolase.